The primary structure comprises 772 residues: Putative ribosomal protein S6 kinase alpha-2 (772 aa).

The Protein kinase 1 domain occupies 17 to 284 (FALLRVLGKG…VDEIKNHKFM (268 aa)). Residues 23 to 31 (LGKGAYGKV) and lysine 49 contribute to the ATP site. The active-site Proton acceptor is the aspartate 145. Phosphoserine; by autocatalysis is present on residues serine 180, serine 342, and serine 347. An AGC-kinase C-terminal domain is found at 285–353 (SSIDWDAAVK…VSPSVIFAND (69 aa)). The 272-residue stretch at 382-653 (KSDAGLLGKG…MQELTAHMWL (272 aa)) folds into the Protein kinase 2 domain. ATP is bound by residues 388-396 (LGKGAFSVV) and lysine 411. Aspartate 500 serves as the catalytic Proton acceptor. Residues 706–772 (RGIKRQSGDK…IRETRGSDSS (67 aa)) form a disordered region. At serine 712 the chain carries Phosphoserine; by autocatalysis. Polar residues-rich tracts occupy residues 718 to 727 (SGNSKNSRVT) and 739 to 748 (EMTSSTSRPS).

It belongs to the protein kinase superfamily. AGC Ser/Thr protein kinase family. S6 kinase subfamily. The cofactor is Mg(2+).

It catalyses the reaction L-seryl-[protein] + ATP = O-phospho-L-seryl-[protein] + ADP + H(+). The enzyme catalyses L-threonyl-[protein] + ATP = O-phospho-L-threonyl-[protein] + ADP + H(+). With respect to regulation, activated by multiple phosphorylations on threonine and serine residues. Serine/threonine kinase that may play a role in mediating the mitogen- and stress-induced effects on transcription. May repress transcription via phosphorylation of 'Ser-1' of histone H2A. May phosphorylate histone H3. The sequence is that of Putative ribosomal protein S6 kinase alpha-2 (rskn-2) from Caenorhabditis elegans.